Consider the following 397-residue polypeptide: 1-deoxy-D-xylulose 5-phosphate reductoisomerase (397 aa).

The NADPH site is built by S10, G11, S12, I13, A36, R37, and N124. K125 contributes to the 1-deoxy-D-xylulose 5-phosphate binding site. E126 lines the NADPH pocket. Residue D150 participates in Mn(2+) binding. Positions 151, 152, 186, and 209 each coordinate 1-deoxy-D-xylulose 5-phosphate. E152 provides a ligand contact to Mn(2+). G215 lines the NADPH pocket. 1-deoxy-D-xylulose 5-phosphate is bound by residues S222, N227, K228, and E231. E231 contributes to the Mn(2+) binding site.

This sequence belongs to the DXR family. The cofactor is Mg(2+). Requires Mn(2+) as cofactor.

It carries out the reaction 2-C-methyl-D-erythritol 4-phosphate + NADP(+) = 1-deoxy-D-xylulose 5-phosphate + NADPH + H(+). Its pathway is isoprenoid biosynthesis; isopentenyl diphosphate biosynthesis via DXP pathway; isopentenyl diphosphate from 1-deoxy-D-xylulose 5-phosphate: step 1/6. Its function is as follows. Catalyzes the NADPH-dependent rearrangement and reduction of 1-deoxy-D-xylulose-5-phosphate (DXP) to 2-C-methyl-D-erythritol 4-phosphate (MEP). In Aeromonas salmonicida (strain A449), this protein is 1-deoxy-D-xylulose 5-phosphate reductoisomerase.